An 851-amino-acid chain; its full sequence is Thrombospondin type-1 domain-containing protein 1 (851 aa).

An N-terminal signal peptide occupies residues 1–24 (MKPMLKDFSNLLLVVLCDYVLGEA). The Extracellular segment spans residues 25 to 412 (EYLLLQEPVH…SPQDPVKSNN (388 aa)). N-linked (GlcNAc...) asparagine glycosylation is found at N53, N58, N69, N110, N135, and N304. Residues 339–392 (IETWGPWQPWSPCSTTCGDAVRERRRLCVTSFPSRPSCSGMSSETSPCSLEECA) form the TSP type-1 domain. Cystine bridges form between C351-C386, C355-C391, and C366-C376. Residues 413–433 (VVTVTGISLCLFIIFATVLIT) traverse the membrane as a helical segment. The Cytoplasmic portion of the chain corresponds to 434 to 851 (LWRRFGRAPK…STLSVEKLVI (418 aa)). S462 is modified (phosphoserine). Disordered stretches follow at residues 471-516 (SEPR…ESFQ), 626-646 (KSQI…HSRS), and 682-777 (SRMR…SSPI). A compositionally biased stretch (basic and acidic residues) spans 685–695 (RTWDQMEDRCR). Positions 765-776 (SHRSASRKQSSP) are enriched in polar residues.

Part of a complex composed of THSD1, PTK2/FAK1, TLN1 and VCL. Interacts with TLN1. As to expression, expressed in cerebral vascular endothelium.

It is found in the endosome membrane. It localises to the cell junction. Its subcellular location is the focal adhesion. Its function is as follows. Is a positive regulator of nascent focal adhesion assembly, involved in the modulation of endothelial cell attachment to the extracellular matrix. In Mus musculus (Mouse), this protein is Thrombospondin type-1 domain-containing protein 1 (Thsd1).